A 533-amino-acid polypeptide reads, in one-letter code: NAD(P)H-quinone oxidoreductase chain 4 (533 aa).

A run of 15 helical transmembrane segments spans residues 5–25 (VPWL…VPLV), 36–56 (WYAL…YLTG), 70–90 (VSWL…LSMP), 91–111 (LILL…PVSF), 115–135 (LFYF…AVQD), 137–157 (LLFF…LAIW), 169–189 (FILY…AMGF), 210–230 (GFQL…LPIV), 244–264 (TAPV…YALL), 278–298 (FAPL…LTSF), 315–335 (MGFV…GAML), 336–356 (QMIS…ATYD), 377–397 (FALW…SGFV), 418–438 (VVIC…LLSM), and 465–485 (VYII…PKLM).

It belongs to the complex I subunit 4 family.

Its subcellular location is the cellular thylakoid membrane. The catalysed reaction is a plastoquinone + NADH + (n+1) H(+)(in) = a plastoquinol + NAD(+) + n H(+)(out). It carries out the reaction a plastoquinone + NADPH + (n+1) H(+)(in) = a plastoquinol + NADP(+) + n H(+)(out). Functionally, NDH-1 shuttles electrons from NAD(P)H, via FMN and iron-sulfur (Fe-S) centers, to quinones in the respiratory chain. The immediate electron acceptor for the enzyme in this species is believed to be plastoquinone. Couples the redox reaction to proton translocation (for every two electrons transferred, four hydrogen ions are translocated across the cytoplasmic membrane), and thus conserves the redox energy in a proton gradient. In Synechococcus sp. (strain CC9605), this protein is NAD(P)H-quinone oxidoreductase chain 4.